Consider the following 107-residue polypeptide: uncharacterized protein (107 aa).

A helical transmembrane segment spans residues 62–79 (LLVVIVYYFSHVGSFSLA).

Its subcellular location is the nucleus membrane. This is an uncharacterized protein from Schizosaccharomyces pombe (strain 972 / ATCC 24843) (Fission yeast).